The following is a 1301-amino-acid chain: Zinc finger protein 532 (1301 aa).

3 disordered regions span residues 26–206 (PKAA…RETE), 223–266 (AEDK…SSSK), and 281–366 (KAAS…IKTI). Positions 32–52 (SGHDDHESHMKQNAHGEDDSH) are enriched in basic and acidic residues. A compositionally biased stretch (polar residues) spans 84 to 101 (PTGNGLHNGFLTASSLDS). Positions 102-111 (YSKDGAKSLK) are enriched in basic and acidic residues. A compositionally biased stretch (polar residues) spans 122–133 (KDSTFSQFSPIS). Residues serine 130, serine 133, and serine 134 each carry the phosphoserine modification. The segment covering 136 to 151 (EEFDDDEKIEVDDPPD) has biased composition (acidic residues). The segment covering 158-170 (SFRSNVLTGSAPQ) has biased composition (polar residues). Residue lysine 175 is modified to N6-acetyllysine. Residues 182–195 (ENSSKTGLSTSGNV) show a composition bias toward polar residues. 2 stretches are compositionally biased toward basic and acidic residues: residues 196 to 206 (EKNKAVKRETE) and 223 to 250 (AEDK…EKND). At threonine 205 the chain carries Phosphothreonine. A phosphoserine mark is found at serine 252, serine 307, and serine 314. Over residues 303 to 315 (EVNDSPRAADKSP) the composition is skewed to basic and acidic residues. A compositionally biased stretch (low complexity) spans 337–359 (SISSENSSKGSPSSPAGSTPAIP). Serine 434 bears the Phosphoserine mark. Residues lysine 459 and lysine 516 each participate in a glycyl lysine isopeptide (Lys-Gly) (interchain with G-Cter in SUMO2) cross-link. The C2H2-type 1; degenerate zinc-finger motif lies at 616-635 (YKCLECGDSFALEKSLTQHY). Residues 754 to 779 (LKCLECNEVFQDETSLATHFQQAADT) form a C2H2-type 2; degenerate zinc finger. C2H2-type zinc fingers lie at residues 783-805 (KTCT…QRIH), 842-865 (FRCV…QGSH), 870-893 (YKCP…YTQH), 905-927 (YKCS…FDQH), and 936-959 (FKCP…KSMH). Lysine 980 is covalently cross-linked (Glycyl lysine isopeptide (Lys-Gly) (interchain with G-Cter in SUMO2)). A disordered region spans residues 983 to 1017 (TQNSANQNKEDTKSMNGKEKLEKKSPSPVKKSMET). The segment covering 990 to 1017 (NKEDTKSMNGKEKLEKKSPSPVKKSMET) has biased composition (basic and acidic residues). 2 consecutive C2H2-type zinc fingers follow at residues 1025-1048 (WTCW…RKEH) and 1055-1078 (HPCR…RIKH). Residues 1085–1111 (YACSHCPDSRRTFTKRLMLEKHVQLMH) form a C2H2-type 10; degenerate zinc finger. Serine 1140 bears the Phosphoserine mark. Glycyl lysine isopeptide (Lys-Gly) (interchain with G-Cter in SUMO2) cross-links involve residues lysine 1144 and lysine 1167. The segment at 1203-1226 (YQCRECGLCYTSHVSLSRHLFIVH) adopts a C2H2-type 11 zinc-finger fold. The disordered stretch occupies residues 1230 to 1263 (EPQPVSKQNGAGEDNQQENKPSHEDESPDGAVSD). Residues 1264–1286 (RKCKVCAKTFETEAALNTHMRTH) form a C2H2-type 12 zinc finger.

It belongs to the krueppel C2H2-type zinc-finger protein family.

The protein localises to the nucleus. May be involved in transcriptional regulation. This is Zinc finger protein 532 (ZNF532) from Homo sapiens (Human).